Reading from the N-terminus, the 257-residue chain is Diaminopimelate epimerase (257 aa).

Asparagine 6 and asparagine 57 together coordinate substrate. The active-site Proton donor is the cysteine 66. Substrate is bound by residues 67 to 68, asparagine 170, and 188 to 189; these read GN and ER. The active-site Proton acceptor is cysteine 198. 199–200 is a binding site for substrate; the sequence is GT.

Belongs to the diaminopimelate epimerase family. Homodimer.

The protein resides in the cytoplasm. The enzyme catalyses (2S,6S)-2,6-diaminopimelate = meso-2,6-diaminopimelate. It functions in the pathway amino-acid biosynthesis; L-lysine biosynthesis via DAP pathway; DL-2,6-diaminopimelate from LL-2,6-diaminopimelate: step 1/1. Functionally, catalyzes the stereoinversion of LL-2,6-diaminopimelate (L,L-DAP) to meso-diaminopimelate (meso-DAP), a precursor of L-lysine and an essential component of the bacterial peptidoglycan. This Chlorobaculum tepidum (strain ATCC 49652 / DSM 12025 / NBRC 103806 / TLS) (Chlorobium tepidum) protein is Diaminopimelate epimerase.